The sequence spans 206 residues: N-(5'-phosphoribosyl)anthranilate isomerase (206 aa).

Belongs to the TrpF family.

It carries out the reaction N-(5-phospho-beta-D-ribosyl)anthranilate = 1-(2-carboxyphenylamino)-1-deoxy-D-ribulose 5-phosphate. The protein operates within amino-acid biosynthesis; L-tryptophan biosynthesis; L-tryptophan from chorismate: step 3/5. In Pseudomonas syringae pv. tomato (strain ATCC BAA-871 / DC3000), this protein is N-(5'-phosphoribosyl)anthranilate isomerase.